We begin with the raw amino-acid sequence, 217 residues long: uncharacterized protein (217 aa).

One can recognise an ABC transporter domain in the interval 14–217; that stretch reads LAVNNLCIER…NELATEIISL (204 aa). 46–53 contributes to the ATP binding site; that stretch reads GEIGSGKT.

Belongs to the ABC transporter superfamily.

This is an uncharacterized protein from Haemophilus influenzae (strain ATCC 51907 / DSM 11121 / KW20 / Rd).